Reading from the N-terminus, the 62-residue chain is Cecropin-D (62 aa).

An N-terminal signal peptide occupies residues 1–22; that stretch reads MNFTKILFFVVACVFAMRTVSA. Residues 23–24 constitute a propeptide, removed by a dipeptidylpeptidase; that stretch reads AP. Lys60 carries the post-translational modification Lysine amide.

This sequence belongs to the cecropin family.

The protein resides in the secreted. Cecropins have lytic and antibacterial activity against several Gram-positive and Gram-negative bacteria. The chain is Cecropin-D from Hyalophora cecropia (Cecropia moth).